Here is a 256-residue protein sequence, read N- to C-terminus: Thiazole synthase (256 aa).

Catalysis depends on lysine 95, which acts as the Schiff-base intermediate with DXP. 1-deoxy-D-xylulose 5-phosphate contacts are provided by residues glycine 156, 182–183 (AG), and 204–205 (NT).

Belongs to the ThiG family. In terms of assembly, homotetramer. Forms heterodimers with either ThiH or ThiS.

The protein localises to the cytoplasm. It carries out the reaction [ThiS sulfur-carrier protein]-C-terminal-Gly-aminoethanethioate + 2-iminoacetate + 1-deoxy-D-xylulose 5-phosphate = [ThiS sulfur-carrier protein]-C-terminal Gly-Gly + 2-[(2R,5Z)-2-carboxy-4-methylthiazol-5(2H)-ylidene]ethyl phosphate + 2 H2O + H(+). It functions in the pathway cofactor biosynthesis; thiamine diphosphate biosynthesis. Catalyzes the rearrangement of 1-deoxy-D-xylulose 5-phosphate (DXP) to produce the thiazole phosphate moiety of thiamine. Sulfur is provided by the thiocarboxylate moiety of the carrier protein ThiS. In vitro, sulfur can be provided by H(2)S. This Shigella boydii serotype 18 (strain CDC 3083-94 / BS512) protein is Thiazole synthase.